Here is a 110-residue protein sequence, read N- to C-terminus: UPF0060 membrane protein Ajs_2087 (110 aa).

4 consecutive transmembrane segments (helical) span residues 7-27 (LALFLLTAVAEIVGCYLPWLW), 33-53 (SAWLLVPAAASLALFAWLLTL), 63-83 (AAYGGVYVAVALVWLWTVDGV), and 86-106 (GPWDWLGVAVTLCGMAIIAFA).

Belongs to the UPF0060 family.

The protein localises to the cell inner membrane. The protein is UPF0060 membrane protein Ajs_2087 of Acidovorax sp. (strain JS42).